Here is a 153-residue protein sequence, read N- to C-terminus: Pheromone-binding protein Gp-9 (153 aa).

An N-terminal signal peptide occupies residues 1-19 (MKTFVLHIFIFAFVAFASA). Cystine bridges form between Cys37–Cys77, Cys73–Cys129, and Cys118–Cys138.

It belongs to the PBP/GOBP family. Homodimer.

The protein localises to the secreted. Its function is as follows. Colony queen number, a major feature of social organization, is associated with worker genotype for Gp-9. Colonies are headed by either a single reproductive queen (monogyne form) or multiple queens (polygyne form). Differences in worker Gp-9 genotypes between social forms may cause differences in workers' abilities to recognize queens and regulate their numbers. This is Pheromone-binding protein Gp-9 from Solenopsis amblychila (Desert fire ant).